Consider the following 243-residue polypeptide: ATP-dependent dethiobiotin synthetase BioD (243 aa).

12 to 17 (DVGKTL) is an ATP binding site. Residue threonine 16 participates in Mg(2+) binding. Lysine 37 is a catalytic residue. Position 41 (serine 41) interacts with substrate. Residues aspartate 54, 115–118 (EGCG), and 179–180 (NM) contribute to the ATP site. Mg(2+) is bound by residues aspartate 54 and glutamate 115.

The protein belongs to the dethiobiotin synthetase family. In terms of assembly, homodimer. Mg(2+) serves as cofactor.

It localises to the cytoplasm. The catalysed reaction is (7R,8S)-7,8-diammoniononanoate + CO2 + ATP = (4R,5S)-dethiobiotin + ADP + phosphate + 3 H(+). The protein operates within cofactor biosynthesis; biotin biosynthesis; biotin from 7,8-diaminononanoate: step 1/2. Catalyzes a mechanistically unusual reaction, the ATP-dependent insertion of CO2 between the N7 and N8 nitrogen atoms of 7,8-diaminopelargonic acid (DAPA, also called 7,8-diammoniononanoate) to form a ureido ring. The chain is ATP-dependent dethiobiotin synthetase BioD from Caldicellulosiruptor saccharolyticus (strain ATCC 43494 / DSM 8903 / Tp8T 6331).